The sequence spans 1871 residues: Plexin-A3 (1871 aa).

An N-terminal signal peptide occupies residues 1–19 (MPSVCLLLLLFLAVGGALG). The region spanning 20–488 (NRPFRAFVVT…SEKQVSQLPV (469 aa)) is the Sema domain. At 20-1220 (NRPFRAFVVT…SAERALTLPA (1201 aa)) the chain is on the extracellular side. A glycan (N-linked (GlcNAc...) asparagine) is linked at Asn59. Intrachain disulfides connect Cys77–Cys86, Cys112–Cys120, Cys266–Cys387, Cys282–Cys338, Cys356–Cys375, Cys491–Cys508, Cys497–Cys539, Cys500–Cys517, and Cys511–Cys523. A glycan (N-linked (GlcNAc...) asparagine) is linked at Asn548. Cys574 and Cys594 form a disulfide bridge. N-linked (GlcNAc...) asparagine glycosylation is found at Asn637, Asn738, and Asn746. 4 consecutive IPT/TIG domains span residues 840-933 (PRIT…YSFV), 935-1020 (PTFD…YTYT), 1023-1122 (PTVT…FTYY), and 1125-1211 (PSFE…LHIS). N-linked (GlcNAc...) asparagine glycosylation is found at Asn1009, Asn1036, Asn1073, Asn1115, and Asn1162. The chain crosses the membrane as a helical span at residues 1221–1241 (MMGLAAGGGLLLLAITAVLVA). The Cytoplasmic segment spans residues 1242 to 1871 (YKRKTQDADR…QIISLVSSDS (630 aa)). A Phosphoserine modification is found at Ser1596.

The protein belongs to the plexin family. As to quaternary structure, interacts with CBFA2T3/MTG16.

It is found in the cell membrane. In terms of biological role, coreceptor for SEMA3A and SEMA3F. Necessary for signaling by class 3 semaphorins and subsequent remodeling of the cytoskeleton. Plays a role in axon guidance in the developing nervous system. Regulates the migration of sympathetic neurons, but not of neural crest precursors. Required for normal dendrite spine morphology in pyramidal neurons. May play a role in regulating semaphorin-mediated programmed cell death in the developing nervous system. Class 3 semaphorins bind to a complex composed of a neuropilin and a plexin. The plexin modulates the affinity of the complex for specific semaphorins, and its cytoplasmic domain is required for the activation of down-stream signaling events in the cytoplasm. In Homo sapiens (Human), this protein is Plexin-A3 (PLXNA3).